The chain runs to 479 residues: Anaerobic nitric oxide reductase flavorubredoxin (479 aa).

The tract at residues 30–210 (LRGSSYNSYL…PFSRLVTPKI (181 aa)) is zinc metallo-hydrolase. Fe cation is bound by residues H79, E81, D83, H147, D166, and H227. A Flavodoxin-like domain is found at 254-393 (ITIFYDTMSN…LCRQHGRDIA (140 aa)). FMN is bound by residues 260-264 (TMSNN) and 342-369 (AFGSHGWSGGAVDRLSTRLQDAGFEMSL). Residues 423–474 (GPKMQCSVCQWIYDPALGEPLQDVAPGTPWSDVPDNFLCPECSLGKDVFDVL) form the Rubredoxin-like domain. The Fe cation site is built by C428, C431, C461, and C464.

This sequence in the N-terminal section; belongs to the zinc metallo-hydrolase group 3 family. As to quaternary structure, homotetramer. Fe cation serves as cofactor. FMN is required as a cofactor.

It localises to the cytoplasm. The protein operates within nitrogen metabolism; nitric oxide reduction. Its function is as follows. Anaerobic nitric oxide reductase; uses NADH to detoxify nitric oxide (NO), protecting several 4Fe-4S NO-sensitive enzymes. Has at least 2 reductase partners, only one of which (NorW, flavorubredoxin reductase) has been identified. NO probably binds to the di-iron center; electrons enter from the NorW at rubredoxin and are transferred sequentially to the FMN center and the di-iron center. Also able to function as an aerobic oxygen reductase. This Salmonella paratyphi B (strain ATCC BAA-1250 / SPB7) protein is Anaerobic nitric oxide reductase flavorubredoxin.